Reading from the N-terminus, the 227-residue chain is Cytochrome c oxidase subunit 2 (227 aa).

The Mitochondrial intermembrane segment spans residues 1-14 (MAYPFQMGLQDATS). A helical membrane pass occupies residues 15–45 (PIMEELLHFHDHTLMIVFLISSLVLYIISLM). The Mitochondrial matrix portion of the chain corresponds to 46–59 (LTTKLTHTSTMDAQ). A helical transmembrane segment spans residues 60–87 (EVETIWTILPAIILILIALPSLRILYMM). At 88-227 (DEINNPSLTV…HFEKWSASLL (140 aa)) the chain is on the mitochondrial intermembrane side. Cu cation contacts are provided by His-161, Cys-196, Glu-198, Cys-200, His-204, and Met-207. Glu-198 is a Mg(2+) binding site.

This sequence belongs to the cytochrome c oxidase subunit 2 family. As to quaternary structure, component of the cytochrome c oxidase (complex IV, CIV), a multisubunit enzyme composed of 14 subunits. The complex is composed of a catalytic core of 3 subunits MT-CO1, MT-CO2 and MT-CO3, encoded in the mitochondrial DNA, and 11 supernumerary subunits COX4I, COX5A, COX5B, COX6A, COX6B, COX6C, COX7A, COX7B, COX7C, COX8 and NDUFA4, which are encoded in the nuclear genome. The complex exists as a monomer or a dimer and forms supercomplexes (SCs) in the inner mitochondrial membrane with NADH-ubiquinone oxidoreductase (complex I, CI) and ubiquinol-cytochrome c oxidoreductase (cytochrome b-c1 complex, complex III, CIII), resulting in different assemblies (supercomplex SCI(1)III(2)IV(1) and megacomplex MCI(2)III(2)IV(2)). Found in a complex with TMEM177, COA6, COX18, COX20, SCO1 and SCO2. Interacts with TMEM177 in a COX20-dependent manner. Interacts with COX20. Interacts with COX16. The cofactor is Cu cation.

Its subcellular location is the mitochondrion inner membrane. The catalysed reaction is 4 Fe(II)-[cytochrome c] + O2 + 8 H(+)(in) = 4 Fe(III)-[cytochrome c] + 2 H2O + 4 H(+)(out). Functionally, component of the cytochrome c oxidase, the last enzyme in the mitochondrial electron transport chain which drives oxidative phosphorylation. The respiratory chain contains 3 multisubunit complexes succinate dehydrogenase (complex II, CII), ubiquinol-cytochrome c oxidoreductase (cytochrome b-c1 complex, complex III, CIII) and cytochrome c oxidase (complex IV, CIV), that cooperate to transfer electrons derived from NADH and succinate to molecular oxygen, creating an electrochemical gradient over the inner membrane that drives transmembrane transport and the ATP synthase. Cytochrome c oxidase is the component of the respiratory chain that catalyzes the reduction of oxygen to water. Electrons originating from reduced cytochrome c in the intermembrane space (IMS) are transferred via the dinuclear copper A center (CU(A)) of subunit 2 and heme A of subunit 1 to the active site in subunit 1, a binuclear center (BNC) formed by heme A3 and copper B (CU(B)). The BNC reduces molecular oxygen to 2 water molecules using 4 electrons from cytochrome c in the IMS and 4 protons from the mitochondrial matrix. This chain is Cytochrome c oxidase subunit 2 (MT-CO2), found in Ailurus fulgens (Himalayan red panda).